Reading from the N-terminus, the 420-residue chain is Structure-specific endonuclease subunit SLX1 homolog (420 aa).

A GIY-YIG domain is found at 19 to 106 (SSDNTYPWQN…QHPLKSRRLR (88 aa)). Disordered regions lie at residues 237-306 (SVEE…AAVN) and 311-330 (DDSA…DDVA). A compositionally biased stretch (low complexity) spans 247-266 (PSSCSVPPSTGSSAAPTPGA). Basic and acidic residues predominate over residues 279–301 (VDPRLDSDDRDDNHQFESPDNHE). The segment covering 311-327 (DDSADDGTTDGNEDGPD) has biased composition (acidic residues). The SLX1-type zinc-finger motif lies at 348 to 405 (CGHCHQSVYQELCIVCLNATCTYRAHLLCAAQAAVHPLGQSSPSETRLVPLRHSCPRC).

Belongs to the SLX1 family. As to quaternary structure, forms a heterodimer with a member of the SLX4 family. Requires a divalent metal cation as cofactor.

It is found in the nucleus. In terms of biological role, catalytic subunit of a heterodimeric structure-specific endonuclease that resolves DNA secondary structures generated during DNA repair and recombination. Has endonuclease activity towards branched DNA substrates, introducing single-strand cuts in duplex DNA close to junctions with ss-DNA. The polypeptide is Structure-specific endonuclease subunit SLX1 homolog (Monosiga brevicollis (Choanoflagellate)).